The following is a 199-amino-acid chain: Phosphatidylethanolamine N-methyltransferase (199 aa).

Topologically, residues 2–12 are lumenal; sequence SWLLGYVDPTE. Residues 13–33 constitute an intramembrane region (helical); that stretch reads PSFVAAVLTIVFNPLFWNVVA. Topologically, residues 34–45 are lumenal; the sequence is RWEQRTRKLSRA. The helical transmembrane segment at 46–66 threads the bilayer; it reads FGSPYLACYSLGSIILLLNIL. Over 67–93 the chain is Cytoplasmic; that stretch reads RSHCFTQAMMSQPKMEGLDSHTIYFLG. Residues 94–114 traverse the membrane as a helical segment; it reads LALLGWGLVFVLSSFYALGFT. An S-adenosyl-L-methionine-binding site is contributed by 98 to 100; sequence GWG. Residues 115–157 are Lumenal-facing; sequence GTFLGDYFGILKESRVTTFPFSVLDNPMYWGSTANYLGWALMH. The chain crosses the membrane as a helical span at residues 158–178; the sequence is ASPTGLLLTVLVALVYVVALL. Topologically, residues 179 to 199 are cytoplasmic; that stretch reads FEEPFTAEIYRRKATRLHKRS. 180–181 is a binding site for S-adenosyl-L-methionine; it reads EE.

The protein belongs to the class VI-like SAM-binding methyltransferase superfamily. PEMT/PEM2 methyltransferase family. As to expression, expressed in liver (at protein level).

Its subcellular location is the endoplasmic reticulum membrane. The protein resides in the mitochondrion membrane. The catalysed reaction is a 1,2-diacyl-sn-glycero-3-phosphoethanolamine + S-adenosyl-L-methionine = a 1,2-diacyl-sn-glycero-3-phospho-N-methylethanolamine + S-adenosyl-L-homocysteine + H(+). The enzyme catalyses a 1,2-diacyl-sn-glycero-3-phospho-N-methylethanolamine + S-adenosyl-L-methionine = a 1,2-diacyl-sn-glycero-3-phospho-N,N-dimethylethanolamine + S-adenosyl-L-homocysteine + H(+). It carries out the reaction a 1,2-diacyl-sn-glycero-3-phospho-N,N-dimethylethanolamine + S-adenosyl-L-methionine = a 1,2-diacyl-sn-glycero-3-phosphocholine + S-adenosyl-L-homocysteine + H(+). It catalyses the reaction 1,2-di-(9Z-octadecenoyl)-sn-glycero-3-phosphoethanolamine + S-adenosyl-L-methionine = 1,2-di-(9Z-octadecenoyl)-sn-glycero-3-phospho-N-methylethanolamine + S-adenosyl-L-homocysteine + H(+). The catalysed reaction is 1,2-di-(9Z-octadecenoyl)-sn-glycero-3-phospho-N-methylethanolamine + S-adenosyl-L-methionine = 1,2-di-(9Z-octadecenoyl)-sn-glycero-3-phospho-N,N-dimethylethanolamine + S-adenosyl-L-homocysteine + H(+). The enzyme catalyses 1,2-di-(9Z-octadecenoyl)-sn-glycero-3-phospho-N,N-dimethylethanolamine + S-adenosyl-L-methionine = 1,2-di-(9Z-octadecenoyl)-sn-glycero-3-phosphocholine + S-adenosyl-L-homocysteine + H(+). It carries out the reaction 1,2-di-(9Z,12Z-octadecadienoyl)-sn-glycero-3-phosphoethanolamine + S-adenosyl-L-methionine = 1,2-di-(9Z,12Z-octadecadienoyl)-sn-glycero-3-phospho-N-methylethanolamine + S-adenosyl-L-homocysteine + H(+). It catalyses the reaction 1,2-di-(9Z,12Z-octadecadienoyl)-sn-glycero-3-phospho-N-methylethanolamine + S-adenosyl-L-methionine = 1,2-di-(9Z,12Z-octadecadienoyl)-sn-glycero-3-phospho-N,N-dimethylethanolamine + S-adenosyl-L-homocysteine + H(+). The catalysed reaction is 1,2-di-(9Z,12Z-octadecadienoyl)-sn-glycero-3-phospho-N,N-dimethylethanolamine + S-adenosyl-L-methionine = 1,2-di-(9Z,12Z-octadecadienoyl)-sn-glycero-3-phosphocholine + S-adenosyl-L-homocysteine + H(+). The enzyme catalyses 1,2-di-(9Z,12Z,15Z-octadecatrienoyl)-sn-glycero-3-phosphoethanolamine + S-adenosyl-L-methionine = 1,2-di-(9Z,12Z,15Z-octadecatrienoyl)-sn-glycero-3-phospho-N-methylethanolamine + S-adenosyl-L-homocysteine + H(+). It carries out the reaction 1,2-di-(9Z,12Z,15Z-octadecatrienoyl)-sn-glycero-3-phospho-N-methylethanolamine + S-adenosyl-L-methionine = 1,2-di-(9Z,12Z,15Z-octadecatrienoyl)-sn-glycero-3-phospho-N,N-dimethylethanolamine + S-adenosyl-L-homocysteine + H(+). It catalyses the reaction 1,2-di-(9Z,12Z,15Z-octadecatrienoyl)-sn-glycero-3-phospho-N,N-dimethylethanolamine + S-adenosyl-L-methionine = 1,2-di-(9Z,12Z,15Z-octadecatrienoyl)-sn-glycero-3-phosphocholine + S-adenosyl-L-homocysteine + H(+). The catalysed reaction is 1-hexadecanoyl-2-(4Z,7Z,10Z,13Z,16Z,19Z-docosahexaenoyl)-sn-glycero-3-phosphoethanolamine + S-adenosyl-L-methionine = 1-hexadecanoyl-2-(4Z,7Z,10Z,13Z,16Z,19Z-docosahexaenoyl)-sn-glycero-3-phospho-N-methylethanolamine + S-adenosyl-L-homocysteine + H(+). The enzyme catalyses 1-hexadecanoyl-2-(4Z,7Z,10Z,13Z,16Z,19Z-docosahexaenoyl)-sn-glycero-3-phospho-N-methylethanolamine + S-adenosyl-L-methionine = 1-hexadecanoyl-2-(4Z,7Z,10Z,13Z,16Z,19Z-docosahexaenoyl)-sn-glycero-3-phospho-N,N-dimethylethanolamine + S-adenosyl-L-homocysteine + H(+). It carries out the reaction 1-hexadecanoyl-2-(4Z,7Z,10Z,13Z,16Z,19Z-docosahexaenoyl)-sn-glycero-3-phospho-N,N-dimethylethanolamine + S-adenosyl-L-methionine = 1-hexadecanoyl-2-(4Z,7Z,10Z,13Z,16Z,19Z-docosahexaenoyl)-sn-glycero-3-phosphocholine + S-adenosyl-L-homocysteine + H(+). The protein operates within phospholipid metabolism; phosphatidylcholine biosynthesis. In terms of biological role, catalyzes the three sequential steps of the methylation pathway for the biosynthesis of phosphatidylcholine, a critical and essential component for membrane structure. Uses S-adenosylmethionine (S-adenosyl-L-methionine, SAM or AdoMet) as the methyl group donor for the methylation of phosphatidylethanolamine (1,2-diacyl-sn-glycero-3-phosphoethanolamine, PE) to phosphatidylmonomethylethanolamine (1,2-diacyl-sn-glycero-3-phospho-N-methylethanolamine, PMME), PMME to phosphatidyldimethylethanolamine (1,2-diacyl-sn-glycero-3-phospho-N,N-dimethylethanolamine, PDME), and PDME to phosphatidylcholine (1,2-diacyl-sn-glycero-3-phosphocholine, PC), producing S-adenosyl-L-homocysteine in each step. The polypeptide is Phosphatidylethanolamine N-methyltransferase (Rattus norvegicus (Rat)).